Reading from the N-terminus, the 351-residue chain is Phosphoribosylformylglycinamidine cyclo-ligase (351 aa).

The protein belongs to the AIR synthase family.

The protein resides in the cytoplasm. It catalyses the reaction 2-formamido-N(1)-(5-O-phospho-beta-D-ribosyl)acetamidine + ATP = 5-amino-1-(5-phospho-beta-D-ribosyl)imidazole + ADP + phosphate + H(+). The protein operates within purine metabolism; IMP biosynthesis via de novo pathway; 5-amino-1-(5-phospho-D-ribosyl)imidazole from N(2)-formyl-N(1)-(5-phospho-D-ribosyl)glycinamide: step 2/2. The chain is Phosphoribosylformylglycinamidine cyclo-ligase from Lysinibacillus sphaericus (strain C3-41).